A 353-amino-acid chain; its full sequence is Photosystem II protein D1 (353 aa).

At T2 the chain carries N-acetylthreonine. Position 2 is a phosphothreonine (T2). Transmembrane regions (helical) follow at residues Y29–S46, H118–L133, and W142–A156. H118 lines the chlorophyll a pocket. Y126 is a binding site for pheophytin a. Positions 170 and 189 each coordinate [CaMn4O5] cluster. Residues F197–L218 traverse the membrane as a helical segment. H198 provides a ligand contact to chlorophyll a. A quinone is bound by residues H215 and S264–F265. H215 lines the Fe cation pocket. H272 is a binding site for Fe cation. The chain crosses the membrane as a helical span at residues F274–L288. Positions 332, 333, 342, and 344 each coordinate [CaMn4O5] cluster. The propeptide occupies G345–G353.

It belongs to the reaction center PufL/M/PsbA/D family. In terms of assembly, PSII is composed of 1 copy each of membrane proteins PsbA, PsbB, PsbC, PsbD, PsbE, PsbF, PsbH, PsbI, PsbJ, PsbK, PsbL, PsbM, PsbT, PsbX, PsbY, PsbZ, Psb30/Ycf12, at least 3 peripheral proteins of the oxygen-evolving complex and a large number of cofactors. It forms dimeric complexes. It depends on The D1/D2 heterodimer binds P680, chlorophylls that are the primary electron donor of PSII, and subsequent electron acceptors. It shares a non-heme iron and each subunit binds pheophytin, quinone, additional chlorophylls, carotenoids and lipids. D1 provides most of the ligands for the Mn4-Ca-O5 cluster of the oxygen-evolving complex (OEC). There is also a Cl(-1) ion associated with D1 and D2, which is required for oxygen evolution. The PSII complex binds additional chlorophylls, carotenoids and specific lipids. as a cofactor. Post-translationally, tyr-161 forms a radical intermediate that is referred to as redox-active TyrZ, YZ or Y-Z. C-terminally processed by CTPA; processing is essential to allow assembly of the oxygen-evolving complex and thus photosynthetic growth.

The protein resides in the plastid. It is found in the chloroplast thylakoid membrane. The enzyme catalyses 2 a plastoquinone + 4 hnu + 2 H2O = 2 a plastoquinol + O2. Photosystem II (PSII) is a light-driven water:plastoquinone oxidoreductase that uses light energy to abstract electrons from H(2)O, generating O(2) and a proton gradient subsequently used for ATP formation. It consists of a core antenna complex that captures photons, and an electron transfer chain that converts photonic excitation into a charge separation. The D1/D2 (PsbA/PsbD) reaction center heterodimer binds P680, the primary electron donor of PSII as well as several subsequent electron acceptors. The protein is Photosystem II protein D1 of Morus indica (Mulberry).